A 110-amino-acid chain; its full sequence is uncharacterized protein (110 aa).

This is an uncharacterized protein from Acidianus convivator (ABV).